We begin with the raw amino-acid sequence, 209 residues long: Protein TIFY 11c (209 aa).

The Tify domain occupies 93–128; that stretch reads EITEKAQLTIFYGGSVVVFDDFPAEKAGELMKLAGS. Positions 153-177 match the Jas motif; sequence PIARKVSLQRFLEKRKNRIVVAEPL. The Nuclear localization signal signature appears at 155 to 162; the sequence is ARKVSLQR. Residues 175–209 are disordered; sequence EPLPESEKKEAESSKRAKKDDGGASWLQVNPTLSL. The span at 179–196 shows a compositional bias: basic and acidic residues; sequence ESEKKEAESSKRAKKDDG.

This sequence belongs to the TIFY/JAZ family. Post-translationally, ubiquitinated. Targeted for degradation by the SCF(COI1) E3 ubiquitin ligase-proteasome pathway during jasmonate signaling.

It is found in the nucleus. Repressor of jasmonate responses. This is Protein TIFY 11c from Oryza sativa subsp. indica (Rice).